Here is a 718-residue protein sequence, read N- to C-terminus: Methionine--tRNA ligase (718 aa).

The 'HIGH' region signature appears at 12–22 (PYANGDIHLGH). Residues Cys-143, Cys-146, Cys-156, and Cys-159 each contribute to the Zn(2+) site. A 'KMSKS' region motif is present at residues 349 to 353 (KMSKS). Lys-352 is an ATP binding site. The tract at residues 573–599 (AAPAAKVASSQQRHAEKQQHEAQSAET) is disordered. Residues 608–718 (DFTKVDLRIA…TGAASGMRVK (111 aa)) enclose the tRNA-binding domain.

The protein belongs to the class-I aminoacyl-tRNA synthetase family. MetG type 1 subfamily. As to quaternary structure, homodimer. The cofactor is Zn(2+).

It localises to the cytoplasm. The enzyme catalyses tRNA(Met) + L-methionine + ATP = L-methionyl-tRNA(Met) + AMP + diphosphate. Is required not only for elongation of protein synthesis but also for the initiation of all mRNA translation through initiator tRNA(fMet) aminoacylation. This is Methionine--tRNA ligase from Aromatoleum aromaticum (strain DSM 19018 / LMG 30748 / EbN1) (Azoarcus sp. (strain EbN1)).